Reading from the N-terminus, the 208-residue chain is Adenylyl-sulfate kinase (208 aa).

An ATP-binding site is contributed by 31-38; it reads GLSGSGKS. The Phosphoserine intermediate role is filled by Ser-105.

It belongs to the APS kinase family.

It carries out the reaction adenosine 5'-phosphosulfate + ATP = 3'-phosphoadenylyl sulfate + ADP + H(+). It participates in sulfur metabolism; hydrogen sulfide biosynthesis; sulfite from sulfate: step 2/3. Functionally, catalyzes the synthesis of activated sulfate. This Pseudomonas entomophila (strain L48) protein is Adenylyl-sulfate kinase.